The sequence spans 102 residues: MVKIISSENFDSFIASGLVLVDFFAEWCGPCRMLTPILENLAAELPHVTIGKINIDENSKPAETYEVSSIPTLILFKDGNEVARVVGLKDKEFLTNLINKHA.

In terms of domain architecture, Thioredoxin spans 1–102; that stretch reads MVKIISSENF…FLTNLINKHA (102 aa). C28 and C31 are joined by a disulfide.

It belongs to the thioredoxin family.

Its function is as follows. Participates in various redox reactions through the reversible oxidation of its active center dithiol to a disulfide and catalyzes dithiol-disulfide exchange reactions. The sequence is that of Thioredoxin (trxA) from Chlamydia pneumoniae (Chlamydophila pneumoniae).